Reading from the N-terminus, the 226-residue chain is N-(5'-phosphoribosyl)anthranilate isomerase 2 (226 aa).

The protein belongs to the TrpF family.

The catalysed reaction is N-(5-phospho-beta-D-ribosyl)anthranilate = 1-(2-carboxyphenylamino)-1-deoxy-D-ribulose 5-phosphate. Its pathway is amino-acid biosynthesis; L-tryptophan biosynthesis; L-tryptophan from chorismate: step 3/5. In Methanosarcina mazei (strain ATCC BAA-159 / DSM 3647 / Goe1 / Go1 / JCM 11833 / OCM 88) (Methanosarcina frisia), this protein is N-(5'-phosphoribosyl)anthranilate isomerase 2 (trpF2).